Reading from the N-terminus, the 443-residue chain is Phenylalanine--tRNA ligase alpha subunit (443 aa).

Residues Thr332, 375 to 377, and Tyr415 contribute to the L-phenylalanine site; that span reads QVE. Residue Glu417 coordinates Mg(2+). Phe441 contacts L-phenylalanine.

Belongs to the class-II aminoacyl-tRNA synthetase family. Phe-tRNA synthetase alpha subunit type 2 subfamily. Heterotetramer; dimer of two heterodimers formed by FARSA and FARSB. It depends on Mg(2+) as a cofactor.

The protein localises to the cytoplasm. The enzyme catalyses tRNA(Phe) + L-phenylalanine + ATP = L-phenylalanyl-tRNA(Phe) + AMP + diphosphate + H(+). The sequence is that of Phenylalanine--tRNA ligase alpha subunit (FARSA) from Gallus gallus (Chicken).